Here is a 181-residue protein sequence, read N- to C-terminus: Crossover junction endodeoxyribonuclease RuvC (181 aa).

Active-site residues include D7, E67, and D139. Positions 7, 67, and 139 each coordinate Mg(2+).

Belongs to the RuvC family. In terms of assembly, homodimer which binds Holliday junction (HJ) DNA. The HJ becomes 2-fold symmetrical on binding to RuvC with unstacked arms; it has a different conformation from HJ DNA in complex with RuvA. In the full resolvosome a probable DNA-RuvA(4)-RuvB(12)-RuvC(2) complex forms which resolves the HJ. It depends on Mg(2+) as a cofactor.

It localises to the cytoplasm. It catalyses the reaction Endonucleolytic cleavage at a junction such as a reciprocal single-stranded crossover between two homologous DNA duplexes (Holliday junction).. Functionally, the RuvA-RuvB-RuvC complex processes Holliday junction (HJ) DNA during genetic recombination and DNA repair. Endonuclease that resolves HJ intermediates. Cleaves cruciform DNA by making single-stranded nicks across the HJ at symmetrical positions within the homologous arms, yielding a 5'-phosphate and a 3'-hydroxyl group; requires a central core of homology in the junction. The consensus cleavage sequence is 5'-(A/T)TT(C/G)-3'. Cleavage occurs on the 3'-side of the TT dinucleotide at the point of strand exchange. HJ branch migration catalyzed by RuvA-RuvB allows RuvC to scan DNA until it finds its consensus sequence, where it cleaves and resolves the cruciform DNA. The polypeptide is Crossover junction endodeoxyribonuclease RuvC (Bordetella avium (strain 197N)).